Here is a 154-residue protein sequence, read N- to C-terminus: 3-dehydroquinate dehydratase (154 aa).

Tyr-23 serves as the catalytic Proton acceptor. Substrate-binding residues include Asn-75, His-81, and Asp-88. The active-site Proton donor is the His-101. Substrate is bound by residues 102–103 and Arg-112; that span reads LS.

Belongs to the type-II 3-dehydroquinase family. In terms of assembly, homododecamer.

It carries out the reaction 3-dehydroquinate = 3-dehydroshikimate + H2O. The protein operates within metabolic intermediate biosynthesis; chorismate biosynthesis; chorismate from D-erythrose 4-phosphate and phosphoenolpyruvate: step 3/7. In terms of biological role, catalyzes a trans-dehydration via an enolate intermediate. The sequence is that of 3-dehydroquinate dehydratase from Teredinibacter turnerae (strain ATCC 39867 / T7901).